We begin with the raw amino-acid sequence, 489 residues long: MSGLLPVAVYALKVPAGGLLIPAVPDAAATFRVSMAAIDPDETPEFEDGQTRPRATLKLIRPPADMDIDESDDDYEEDSEEDSDDEEINGGPSDKEKARKLKEAAALKELEDEDEDDDSEGDDENFDLKAAISKLVKGKAPATDDDEDDESDEGLELDEMVVCTLDPERHCQQPLDITVAEGERVFFKVTGTHTVYLTGNYVIPAEEGPSEYDEDEDDEDDEDDYDLSPDEDELVDMGDLLDDEEEDELDGLAHPRVTEIESDEEEAPKLVESKGKNKRTADSDEEMALDDMMAKDGKAKGADNGEPAPSKKQQKKLKKNNGEAAAVEQKKEAKVAKEGKEGKEGKEAKEAKKVQFAKNLEQGPTPSGQKPGETTTGTLGVKEVKGVKIDDKKLGKGPAAKAGNTVAMRYIGKLEDGKVFDANKKGKPFTFKLGKGEVIKGWDIGIAGMAVGGERRITIPPHLAYGKKALPGIPANSKLIFDVKLLEIK.

Disordered stretches follow at residues 40–157 and 199–378; these read PDET…GLEL and GNYV…TTGT. Residues 66–88 are compositionally biased toward acidic residues; the sequence is MDIDESDDDYEEDSEEDSDDEEI. The segment covering 93 to 109 has biased composition (basic and acidic residues); that stretch reads SDKEKARKLKEAAALKE. 3 stretches are compositionally biased toward acidic residues: residues 110–125, 143–157, and 208–250; these read LEDE…DDEN, TDDD…GLEL, and GPSE…DELD. 3 stretches are compositionally biased toward basic and acidic residues: residues 267-282, 292-303, and 328-353; these read APKL…RTAD, MMAKDGKAKGAD, and EQKK…EAKK. Residues 362–378 are compositionally biased toward polar residues; sequence QGPTPSGQKPGETTTGT. The PPIase FKBP-type domain maps to 406-489; sequence VAMRYIGKLE…IFDVKLLEIK (84 aa).

The protein belongs to the FKBP-type PPIase family. FKBP3/4 subfamily. Binds to histones H3 and H4.

The protein resides in the nucleus. It carries out the reaction [protein]-peptidylproline (omega=180) = [protein]-peptidylproline (omega=0). With respect to regulation, inhibited by both FK506 and rapamycin. Its function is as follows. PPIase that acts as a histone chaperone. Histone proline isomerase that increases the rate of cis-trans isomerization at prolines on the histone H3 N-terminal tail. Proline isomerization influences H3 methylation thereby regulating gene expression. The protein is FK506-binding protein 4 (fpr4) of Aspergillus fumigatus (strain ATCC MYA-4609 / CBS 101355 / FGSC A1100 / Af293) (Neosartorya fumigata).